Consider the following 430-residue polypeptide: 3-phosphoshikimate 1-carboxyvinyltransferase (430 aa).

3 residues coordinate 3-phosphoshikimate: Lys-20, Ser-21, and Arg-25. Residue Lys-20 coordinates phosphoenolpyruvate. Phosphoenolpyruvate-binding residues include Gly-92 and Arg-120. Residues Ser-166, Gln-168, Asp-312, and Lys-339 each coordinate 3-phosphoshikimate. Residue Gln-168 coordinates phosphoenolpyruvate. Residue Asp-312 is the Proton acceptor of the active site. Positions 343 and 387 each coordinate phosphoenolpyruvate.

It belongs to the EPSP synthase family. As to quaternary structure, monomer.

It localises to the cytoplasm. It catalyses the reaction 3-phosphoshikimate + phosphoenolpyruvate = 5-O-(1-carboxyvinyl)-3-phosphoshikimate + phosphate. It functions in the pathway metabolic intermediate biosynthesis; chorismate biosynthesis; chorismate from D-erythrose 4-phosphate and phosphoenolpyruvate: step 6/7. Catalyzes the transfer of the enolpyruvyl moiety of phosphoenolpyruvate (PEP) to the 5-hydroxyl of shikimate-3-phosphate (S3P) to produce enolpyruvyl shikimate-3-phosphate and inorganic phosphate. The polypeptide is 3-phosphoshikimate 1-carboxyvinyltransferase (Lactococcus lactis subsp. lactis (strain IL1403) (Streptococcus lactis)).